The following is a 98-amino-acid chain: MSMVYANIFMAFVVSLMGMLVYRSHLMSSLLCLEGMMLSLFVMMSVTILNNHFTLANMAPIILLVFAACEAALGLSLLVMVSNTYGTDYVQNLNLLQC.

3 consecutive transmembrane segments (helical) span residues 1 to 21, 29 to 49, and 61 to 81; these read MSMV…GMLV, SLLC…VTIL, and IILL…LVMV.

It belongs to the complex I subunit 4L family. Core subunit of respiratory chain NADH dehydrogenase (Complex I) which is composed of 45 different subunits.

Its subcellular location is the mitochondrion inner membrane. It carries out the reaction a ubiquinone + NADH + 5 H(+)(in) = a ubiquinol + NAD(+) + 4 H(+)(out). Core subunit of the mitochondrial membrane respiratory chain NADH dehydrogenase (Complex I) which catalyzes electron transfer from NADH through the respiratory chain, using ubiquinone as an electron acceptor. Part of the enzyme membrane arm which is embedded in the lipid bilayer and involved in proton translocation. This is NADH-ubiquinone oxidoreductase chain 4L (MT-ND4L) from Odobenus rosmarus rosmarus (Atlantic walrus).